Consider the following 113-residue polypeptide: Ig kappa chain V-II region MOPC 511 (113 aa).

The framework-1 stretch occupies residues 1–23 (DIVITQDELSKPVTSGESVSISC). A disulfide bridge links cysteine 23 with cysteine 93. Residues 24–39 (RSSKSLLYKDGKTYLN) are complementarity-determining-1. Residues 40–54 (WFLQGPQQSPRLLIY) form a framework-2 region. The interval 55–61 (LMSTRAS) is complementarity-determining-2. The framework-3 stretch occupies residues 62–93 (GVSDRFSGSGSGTDFTLEISRVKAEDVGVYYC). Residues 94–102 (QQLVEYPLT) are complementarity-determining-3. Residues 103-112 (FGAGTKLELK) are framework-4.

The chain is Ig kappa chain V-II region MOPC 511 from Mus musculus (Mouse).